A 319-amino-acid chain; its full sequence is Formimidoylglutamase (319 aa).

Histidine 131, aspartate 154, histidine 156, aspartate 158, cysteine 248, and aspartate 250 together coordinate Mn(2+).

This sequence belongs to the arginase family. It depends on Mn(2+) as a cofactor.

It catalyses the reaction N-formimidoyl-L-glutamate + H2O = formamide + L-glutamate. It participates in amino-acid degradation; L-histidine degradation into L-glutamate; L-glutamate from N-formimidoyl-L-glutamate (hydrolase route): step 1/1. Functionally, catalyzes the conversion of N-formimidoyl-L-glutamate to L-glutamate and formamide. This is Formimidoylglutamase from Legionella pneumophila (strain Lens).